Reading from the N-terminus, the 78-residue chain is 4-methyl-3-hydroxyanthranilic acid carrier protein (78 aa).

At serine 33 the chain carries O-(pantetheine 4'-phosphoryl)serine.

It belongs to the acyl carrier protein (ACP) family. Post-translationally, 4'-phosphopantetheine is transferred from CoA to a specific serine of the apo-form of this carrier protein.

Its pathway is antibiotic biosynthesis. Involved in the biosynthesis of actinomycin. Acts as a carrier in the transfer and thioesterification of 4-methyl-3-hydroxyanthranilic acid (4-MHA). In Streptomyces anulatus (Streptomyces chrysomallus), this protein is 4-methyl-3-hydroxyanthranilic acid carrier protein.